Reading from the N-terminus, the 179-residue chain is MAKLHDKYQETVVAELAKKFGYSSVMQVPRIEKITLNMGVGEAVADKKVMEHALRDMTAIAGQKPIVTVARKSVAGFKIREGYPIGCKVTLRGERMWEFLERLVDIAIPRIRDFRGLSAKAFDGRGNYAMGVREQIIFPEIDYDKIDKIRGMDIVITTSAKTDEEGHALLTAFNFPFKK.

Belongs to the universal ribosomal protein uL5 family. As to quaternary structure, part of the 50S ribosomal subunit; part of the 5S rRNA/L5/L18/L25 subcomplex. Contacts the 5S rRNA and the P site tRNA. Forms a bridge to the 30S subunit in the 70S ribosome.

In terms of biological role, this is one of the proteins that bind and probably mediate the attachment of the 5S RNA into the large ribosomal subunit, where it forms part of the central protuberance. In the 70S ribosome it contacts protein S13 of the 30S subunit (bridge B1b), connecting the 2 subunits; this bridge is implicated in subunit movement. Contacts the P site tRNA; the 5S rRNA and some of its associated proteins might help stabilize positioning of ribosome-bound tRNAs. The polypeptide is Large ribosomal subunit protein uL5 (Shewanella denitrificans (strain OS217 / ATCC BAA-1090 / DSM 15013)).